We begin with the raw amino-acid sequence, 466 residues long: Signal recognition particle 54 kDa protein (466 aa).

GTP contacts are provided by residues 104–111 (GLQGSGKT), 184–188 (DTAGR), and 242–245 (TKLD). The segment at 446–466 (QQQGGGGMGGLGGGGGLGPFG) is disordered. The segment covering 448–466 (QGGGGMGGLGGGGGLGPFG) has biased composition (gly residues).

This sequence belongs to the GTP-binding SRP family. SRP54 subfamily. In terms of assembly, part of the signal recognition particle protein translocation system, which is composed of SRP and FtsY. Archaeal SRP consists of a 7S RNA molecule of 300 nucleotides and two protein subunits: SRP54 and SRP19.

Its subcellular location is the cytoplasm. It carries out the reaction GTP + H2O = GDP + phosphate + H(+). Its function is as follows. Involved in targeting and insertion of nascent membrane proteins into the cytoplasmic membrane. Binds to the hydrophobic signal sequence of the ribosome-nascent chain (RNC) as it emerges from the ribosomes. The SRP-RNC complex is then targeted to the cytoplasmic membrane where it interacts with the SRP receptor FtsY. The polypeptide is Signal recognition particle 54 kDa protein (Haloquadratum walsbyi (strain DSM 16790 / HBSQ001)).